A 57-amino-acid polypeptide reads, in one-letter code: UPF0509 protein YciZ (57 aa).

It belongs to the UPF0509 family.

In Escherichia coli O127:H6 (strain E2348/69 / EPEC), this protein is UPF0509 protein YciZ.